A 198-amino-acid chain; its full sequence is MGKKMTIASLILMTAGLTACGANDNAMNDTRNNGNTRPIGYYTNENDADRQGDGIDHDGPVSELMEDQNDGNRNTTNVNNRDRVTADDRVPLATDGTYNNTNNRNMNRNAANNGYDNQENRRLAAKIANRVKQVKNVNDTQVMVSDDRVVIAVKSHREFTKSDRDNVVKAARNYANGRDVQVSTDKGLFRKLHKMNNR.

Residues 1–21 (MGKKMTIASLILMTAGLTACG) form the signal peptide. The disordered stretch occupies residues 91–115 (PLATDGTYNNTNNRNMNRNAANNGY). The span at 95–115 (DGTYNNTNNRNMNRNAANNGY) shows a compositional bias: low complexity.

The protein resides in the spore cortex. This chain is Sporulation cortex protein CoxA (coxA), found in Bacillus subtilis (strain 168).